Here is a 197-residue protein sequence, read N- to C-terminus: Nucleoid occlusion factor SlmA (197 aa).

The region spanning 7–67 (INRREHILQC…GLIEFIEESL (61 aa)) is the HTH tetR-type domain. The H-T-H motif DNA-binding region spans 30–49 (TTAKLASEVGVSEAALYRHF).

The protein belongs to the nucleoid occlusion factor SlmA family. In terms of assembly, homodimer. Interacts with FtsZ.

The protein resides in the cytoplasm. It is found in the nucleoid. Its function is as follows. Required for nucleoid occlusion (NO) phenomenon, which prevents Z-ring formation and cell division over the nucleoid. Acts as a DNA-associated cell division inhibitor that binds simultaneously chromosomal DNA and FtsZ, and disrupts the assembly of FtsZ polymers. SlmA-DNA-binding sequences (SBS) are dispersed on non-Ter regions of the chromosome, preventing FtsZ polymerization at these regions. This Shewanella sp. (strain MR-7) protein is Nucleoid occlusion factor SlmA.